The primary structure comprises 130 residues: MVLLDPLANALSTIKNAEAIGKSSCIVRPASKNIGNVLKVMQDLGYIGDFEFIDDGKAGIYSVTLVGRINKCGAIKPRYSVGTGSFERWEKQFLPAKNFGALILTTSSGVMSQYEARDKKIGGQLLAYVY.

Belongs to the universal ribosomal protein uS8 family. In terms of assembly, part of the 30S ribosomal subunit.

Functionally, one of the primary rRNA binding proteins, it binds directly to 16S rRNA central domain where it helps coordinate assembly of the platform of the 30S subunit. The chain is Small ribosomal subunit protein uS8 from Methanosarcina mazei (strain ATCC BAA-159 / DSM 3647 / Goe1 / Go1 / JCM 11833 / OCM 88) (Methanosarcina frisia).